Here is a 139-residue protein sequence, read N- to C-terminus: Actin-depolymerizing factor 3 (139 aa).

Residues 7-139 enclose the ADF-H domain; sequence GVAVNDECML…SLDEIKDRAR (133 aa).

Belongs to the actin-binding proteins ADF family. Expressed in all tissues except pollen.

It localises to the cytoplasm. Functionally, actin-depolymerizing protein. Severs actin filaments (F-actin) and binds to actin monomers. The sequence is that of Actin-depolymerizing factor 3 (ADF3) from Zea mays (Maize).